The following is a 102-amino-acid chain: Protein transport protein sec61 subunit beta (102 aa).

The segment covering M1–A15 has biased composition (polar residues). The tract at residues M1–S53 is disordered. Topologically, residues M1–P72 are cytoplasmic. Residues G41–G52 show a composition bias toward low complexity. Residues V73 to A93 traverse the membrane as a helical segment.

The protein belongs to the SEC61-beta family. Heterotrimeric complex composed of SEC61, SBH1 and SSS1.

Its subcellular location is the endoplasmic reticulum membrane. In terms of biological role, necessary for protein translocation in the endoplasmic reticulum. The chain is Protein transport protein sec61 subunit beta (sbh1) from Schizosaccharomyces pombe (strain 972 / ATCC 24843) (Fission yeast).